A 382-amino-acid polypeptide reads, in one-letter code: Fimbrial usher domain-containing protein YdeT (382 aa).

This Escherichia coli (strain K12) protein is Fimbrial usher domain-containing protein YdeT (ydeT).